We begin with the raw amino-acid sequence, 500 residues long: Arabinofuranosidase/B-xylosidase (500 aa).

Residues 1-21 form the signal peptide; it reads MLSNARIIAAGCIAAGSLVAA. N-linked (GlcNAc...) asparagine glycosylation occurs at Asn467.

This sequence belongs to the glycosyl hydrolase 54 family.

The enzyme catalyses Hydrolysis of terminal non-reducing alpha-L-arabinofuranoside residues in alpha-L-arabinosides.. It carries out the reaction Hydrolysis of (1-&gt;4)-beta-D-xylans, to remove successive D-xylose residues from the non-reducing termini.. This chain is Arabinofuranosidase/B-xylosidase (xyl1), found in Trichoderma koningii (Hypocrea koningii).